The chain runs to 200 residues: LexA repressor (200 aa).

The H-T-H motif DNA-binding region spans 28–48 (RAEIAQHFGFSSPNAAEQHLK). Residues serine 117 and lysine 154 each act as for autocatalytic cleavage activity in the active site.

Belongs to the peptidase S24 family. In terms of assembly, homodimer.

It carries out the reaction Hydrolysis of Ala-|-Gly bond in repressor LexA.. Its function is as follows. Represses a number of genes involved in the response to DNA damage (SOS response), including recA and lexA. In the presence of single-stranded DNA, RecA interacts with LexA causing an autocatalytic cleavage which disrupts the DNA-binding part of LexA, leading to derepression of the SOS regulon and eventually DNA repair. This chain is LexA repressor, found in Thiobacillus denitrificans (strain ATCC 25259 / T1).